Here is a 331-residue protein sequence, read N- to C-terminus: Reticulocalbin-1 (331 aa).

The first 29 residues, 1–29 (MARGGRGRRLGLALGLLLALVLAPRVLRA), serve as a signal peptide directing secretion. Residue Asn-53 is glycosylated (N-linked (GlcNAc...) asparagine). Ser-55 carries the post-translational modification Phosphoserine. Phosphothreonine is present on Thr-76. EF-hand domains follow at residues 79–114 (ESKE…VQKR), 115–150 (YIFD…YYLG), 166–201 (KMLP…EEFE), 203–238 (MKEI…HEEN), 244–279 (WVLS…QDYD), and 280–315 (HAQA…FVGS). Ser-80 carries the post-translational modification Phosphoserine; by FAM20C. Ca(2+)-binding residues include Asp-92, Asp-94, Asp-96, Glu-103, Asp-128, Asp-130, Asp-132, Lys-134, Glu-139, Asp-179, Asn-181, Asp-183, Thr-185, Glu-190, Asp-216, Asn-218, Asp-220, Glu-227, Asp-257, Asn-259, Asp-261, Lys-263, Glu-268, Asp-293, Asn-295, Asp-297, Lys-299, and Glu-304. Residues 328 to 331 (HDEL) carry the Prevents secretion from ER motif.

The protein belongs to the CREC family. O-glycosylated. O-mannosylated by POMT1 and POMT2 and elongated by POMGNT1.

The protein localises to the endoplasmic reticulum lumen. May regulate calcium-dependent activities in the endoplasmic reticulum lumen or post-ER compartment. This Homo sapiens (Human) protein is Reticulocalbin-1 (RCN1).